We begin with the raw amino-acid sequence, 147 residues long: Myoglobin (147 aa).

The region spanning 2–141 (ADFDMVLKCW…IIADMEADYK (140 aa)) is the Globin domain. Residue H60 participates in nitrite binding. H60 lines the O2 pocket. H89 contributes to the heme b binding site.

The protein belongs to the globin family. In terms of assembly, monomeric.

It localises to the cytoplasm. It is found in the sarcoplasm. It catalyses the reaction Fe(III)-heme b-[protein] + nitric oxide + H2O = Fe(II)-heme b-[protein] + nitrite + 2 H(+). It carries out the reaction H2O2 + AH2 = A + 2 H2O. Functionally, monomeric heme protein which primary function is to store oxygen and facilitate its diffusion within muscle tissues. Reversibly binds oxygen through a pentacoordinated heme iron and enables its timely and efficient release as needed during periods of heightened demand. Depending on the oxidative conditions of tissues and cells, and in addition to its ability to bind oxygen, it also has a nitrite reductase activity whereby it regulates the production of bioactive nitric oxide. Under stress conditions, like hypoxia and anoxia, it also protects cells against reactive oxygen species thanks to its pseudoperoxidase activity. The protein is Myoglobin (mb) of Notothenia neglecta (Yellowbelly rockcod).